A 401-amino-acid polypeptide reads, in one-letter code: Serine/threonine transporter SstT (401 aa).

8 consecutive transmembrane segments (helical) span residues 17-37, 40-60, 78-98, 138-158, 179-199, 212-232, 295-315, and 336-356; these read IGIG…ITVI, FGSL…LTLV, VICL…GASY, ALAT…GLAF, VVGW…FDTI, LLLL…NPLI, MAGA…TLGI, and ASGV…LFGI.

The protein belongs to the dicarboxylate/amino acid:cation symporter (DAACS) (TC 2.A.23) family.

It is found in the cell membrane. The enzyme catalyses L-serine(in) + Na(+)(in) = L-serine(out) + Na(+)(out). It catalyses the reaction L-threonine(in) + Na(+)(in) = L-threonine(out) + Na(+)(out). Involved in the import of serine and threonine into the cell, with the concomitant import of sodium (symport system). This is Serine/threonine transporter SstT from Streptococcus suis (strain 98HAH33).